A 90-amino-acid chain; its full sequence is Small ribosomal subunit protein uS15 (90 aa).

This sequence belongs to the universal ribosomal protein uS15 family. Part of the 30S ribosomal subunit. Forms a bridge to the 50S subunit in the 70S ribosome, contacting the 23S rRNA.

In terms of biological role, one of the primary rRNA binding proteins, it binds directly to 16S rRNA where it helps nucleate assembly of the platform of the 30S subunit by binding and bridging several RNA helices of the 16S rRNA. Functionally, forms an intersubunit bridge (bridge B4) with the 23S rRNA of the 50S subunit in the ribosome. The protein is Small ribosomal subunit protein uS15 of Campylobacter jejuni subsp. jejuni serotype O:6 (strain 81116 / NCTC 11828).